The primary structure comprises 343 residues: tRNA N6-adenosine threonylcarbamoyltransferase (343 aa).

2 residues coordinate Fe cation: H108 and H112. Substrate contacts are provided by residues 129–133, D161, E178, and S258; that span reads LISGG. D286 serves as a coordination point for Fe cation.

This sequence belongs to the KAE1 / TsaD family. It depends on Fe(2+) as a cofactor.

It localises to the cytoplasm. The enzyme catalyses L-threonylcarbamoyladenylate + adenosine(37) in tRNA = N(6)-L-threonylcarbamoyladenosine(37) in tRNA + AMP + H(+). Required for the formation of a threonylcarbamoyl group on adenosine at position 37 (t(6)A37) in tRNAs that read codons beginning with adenine. Is probably involved in the transfer of the threonylcarbamoyl moiety of threonylcarbamoyl-AMP (TC-AMP) to the N6 group of A37. The sequence is that of tRNA N6-adenosine threonylcarbamoyltransferase from Pyrobaculum aerophilum (strain ATCC 51768 / DSM 7523 / JCM 9630 / CIP 104966 / NBRC 100827 / IM2).